We begin with the raw amino-acid sequence, 416 residues long: Serine hydroxymethyltransferase (416 aa).

(6S)-5,6,7,8-tetrahydrofolate contacts are provided by residues L121 and 125–127; that span reads GHL. K229 carries the post-translational modification N6-(pyridoxal phosphate)lysine.

It belongs to the SHMT family. In terms of assembly, homodimer. Pyridoxal 5'-phosphate is required as a cofactor.

It is found in the cytoplasm. It carries out the reaction (6R)-5,10-methylene-5,6,7,8-tetrahydrofolate + glycine + H2O = (6S)-5,6,7,8-tetrahydrofolate + L-serine. Its pathway is one-carbon metabolism; tetrahydrofolate interconversion. It functions in the pathway amino-acid biosynthesis; glycine biosynthesis; glycine from L-serine: step 1/1. Catalyzes the reversible interconversion of serine and glycine with tetrahydrofolate (THF) serving as the one-carbon carrier. This reaction serves as the major source of one-carbon groups required for the biosynthesis of purines, thymidylate, methionine, and other important biomolecules. Also exhibits THF-independent aldolase activity toward beta-hydroxyamino acids, producing glycine and aldehydes, via a retro-aldol mechanism. The sequence is that of Serine hydroxymethyltransferase from Neisseria gonorrhoeae (strain NCCP11945).